The following is a 177-amino-acid chain: Nucleoside triphosphate/diphosphate phosphatase (177 aa).

The active-site Proton donor is the Arg-23. Mg(2+)-binding residues include Asn-87, Asp-103, Asp-105, Asp-107, Asp-120, and Glu-123.

Belongs to the Ntdp family. Mg(2+) is required as a cofactor.

The enzyme catalyses a ribonucleoside 5'-triphosphate + H2O = a ribonucleoside 5'-diphosphate + phosphate + H(+). The catalysed reaction is a ribonucleoside 5'-diphosphate + H2O = a ribonucleoside 5'-phosphate + phosphate + H(+). Functionally, has nucleoside phosphatase activity towards nucleoside triphosphates and nucleoside diphosphates. This chain is Nucleoside triphosphate/diphosphate phosphatase, found in Streptococcus pneumoniae serotype 19F (strain G54).